Reading from the N-terminus, the 141-residue chain is Acetyltransferase YpeA (141 aa).

Positions 1–141 constitute an N-acetyltransferase domain; sequence MEIRVFRQED…GKRLIEDEEY (141 aa).

The protein belongs to the acetyltransferase family. YpeA subfamily.

In Escherichia coli O157:H7, this protein is Acetyltransferase YpeA.